We begin with the raw amino-acid sequence, 278 residues long: MALKTFKPVTPSLRQLVLVDRRELYKGKPVKALTEGKSSSGGRNNLGRITVRFRGGGHKRVLRNVDFKRRDQLGVAATVERIEYDPNRTAFIALINFPDGKQSYILAPQRLQPGDKVVAGESVDIKPGNAGPVGSMPVGTIVHNVELKIGKGGAIARSAGNYAQIVGRDQGYVTLRLNSGEQRLVHGQCFASVGAVSNPDHMNISLGKAGRNRWLGKRPHNRGVAMNPVDHPHGGGEGRTSGGRNPVTPWGVPTKGKKTRSNKRTDVFILSSRHNRKK.

The interval 222–264 (RGVAMNPVDHPHGGGEGRTSGGRNPVTPWGVPTKGKKTRSNKR) is disordered.

The protein belongs to the universal ribosomal protein uL2 family. Part of the 50S ribosomal subunit. Forms a bridge to the 30S subunit in the 70S ribosome.

In terms of biological role, one of the primary rRNA binding proteins. Required for association of the 30S and 50S subunits to form the 70S ribosome, for tRNA binding and peptide bond formation. It has been suggested to have peptidyltransferase activity; this is somewhat controversial. Makes several contacts with the 16S rRNA in the 70S ribosome. This Methylobacterium radiotolerans (strain ATCC 27329 / DSM 1819 / JCM 2831 / NBRC 15690 / NCIMB 10815 / 0-1) protein is Large ribosomal subunit protein uL2.